A 331-amino-acid chain; its full sequence is Ubiquinone biosynthesis protein UbiU (331 aa).

4 residues coordinate [4Fe-4S] cluster: C169, C176, C193, and C232.

Belongs to the peptidase U32 family. UbiU subfamily. Forms a heterodimer with UbiV. [4Fe-4S] cluster is required as a cofactor.

It functions in the pathway cofactor biosynthesis; ubiquinone biosynthesis. In terms of biological role, required for O(2)-independent ubiquinone (coenzyme Q) biosynthesis. Together with UbiV, is essential for the C6-hydroxylation reaction in the oxygen-independent ubiquinone biosynthesis pathway. The chain is Ubiquinone biosynthesis protein UbiU from Escherichia coli (strain K12).